Consider the following 109-residue polypeptide: MMRGGMGNMNNMMKQMQKMQKQMAKAQEELGEKQVEGTAGGGMVTVIANGHKQILDVKMKEEVVDPEDIEMLQDLVLAATNDALKKAEELSNATMGQFTKGLNLPGGLF.

It belongs to the YbaB/EbfC family. In terms of assembly, homodimer.

It localises to the cytoplasm. The protein localises to the nucleoid. Functionally, binds to DNA and alters its conformation. May be involved in regulation of gene expression, nucleoid organization and DNA protection. This chain is Nucleoid-associated protein Bcer98_0019, found in Bacillus cytotoxicus (strain DSM 22905 / CIP 110041 / 391-98 / NVH 391-98).